A 280-amino-acid polypeptide reads, in one-letter code: Dimethylglycine N-methyltransferase (280 aa).

Belongs to the methyltransferase superfamily. As to quaternary structure, monomer.

The catalysed reaction is N,N-dimethylglycine + S-adenosyl-L-methionine = glycine betaine + S-adenosyl-L-homocysteine + H(+). It participates in amine and polyamine biosynthesis; betaine biosynthesis via glycine pathway; betaine from glycine: step 3/3. Functionally, catalyzes the methylation of dimethylglycine to betaine with S-adenosylmethionine (AdoMet) acting as the methyl donor. It has strict specificity for dimethylglycine as the methyl group acceptors. The polypeptide is Dimethylglycine N-methyltransferase (Parasynechococcus marenigrum (strain WH8102)).